Reading from the N-terminus, the 98-residue chain is Small ribosomal subunit protein uS19 (98 aa).

Positions 77–98 (TRTYRGHAGGKAEKGGSAPKRK) are disordered.

Belongs to the universal ribosomal protein uS19 family.

Protein S19 forms a complex with S13 that binds strongly to the 16S ribosomal RNA. The chain is Small ribosomal subunit protein uS19 from Prosthecochloris aestuarii (strain DSM 271 / SK 413).